A 147-amino-acid polypeptide reads, in one-letter code: D-aminoacyl-tRNA deacylase (147 aa).

The Gly-cisPro motif, important for rejection of L-amino acids motif lies at 137–138; sequence GP.

This sequence belongs to the DTD family. In terms of assembly, homodimer.

The protein resides in the cytoplasm. The enzyme catalyses glycyl-tRNA(Ala) + H2O = tRNA(Ala) + glycine + H(+). It catalyses the reaction a D-aminoacyl-tRNA + H2O = a tRNA + a D-alpha-amino acid + H(+). Functionally, an aminoacyl-tRNA editing enzyme that deacylates mischarged D-aminoacyl-tRNAs. Also deacylates mischarged glycyl-tRNA(Ala), protecting cells against glycine mischarging by AlaRS. Acts via tRNA-based rather than protein-based catalysis; rejects L-amino acids rather than detecting D-amino acids in the active site. By recycling D-aminoacyl-tRNA to D-amino acids and free tRNA molecules, this enzyme counteracts the toxicity associated with the formation of D-aminoacyl-tRNA entities in vivo and helps enforce protein L-homochirality. This is D-aminoacyl-tRNA deacylase from Bacillus pumilus (strain SAFR-032).